We begin with the raw amino-acid sequence, 549 residues long: Glucose-6-phosphate isomerase 1 (549 aa).

Residue E358 is the Proton donor of the active site. Catalysis depends on residues H389 and K513.

The protein belongs to the GPI family.

The protein localises to the cytoplasm. It carries out the reaction alpha-D-glucose 6-phosphate = beta-D-fructose 6-phosphate. The protein operates within carbohydrate biosynthesis; gluconeogenesis. It functions in the pathway carbohydrate degradation; glycolysis; D-glyceraldehyde 3-phosphate and glycerone phosphate from D-glucose: step 2/4. Functionally, catalyzes the reversible isomerization of glucose-6-phosphate to fructose-6-phosphate. The chain is Glucose-6-phosphate isomerase 1 from Streptomyces avermitilis (strain ATCC 31267 / DSM 46492 / JCM 5070 / NBRC 14893 / NCIMB 12804 / NRRL 8165 / MA-4680).